The following is a 102-amino-acid chain: Iron-sulfur cluster assembly protein CyaY (102 aa).

This sequence belongs to the frataxin family.

Involved in iron-sulfur (Fe-S) cluster assembly. May act as a regulator of Fe-S biogenesis. This Pasteurella multocida (strain Pm70) protein is Iron-sulfur cluster assembly protein CyaY.